Consider the following 93-residue polypeptide: MSEEKAVSTEERASRKVRVGYVVSDKMEKTIVVELEDRVKHKLYGKIIRRTTKVKAHDENGVAGVGDRVQLMETRPLSATKHWRLVEVLEKAK.

It belongs to the universal ribosomal protein uS17 family. Part of the 30S ribosomal subunit.

Functionally, one of the primary rRNA binding proteins, it binds specifically to the 5'-end of 16S ribosomal RNA. The protein is Small ribosomal subunit protein uS17 of Rhodococcus erythropolis (strain PR4 / NBRC 100887).